The chain runs to 235 residues: Photosystem I assembly protein Ycf4 (235 aa).

Helical transmembrane passes span 21–43 (NLCW…TSSY) and 63–85 (GIVM…CTIL).

The protein belongs to the Ycf4 family.

It localises to the plastid. The protein localises to the chloroplast thylakoid membrane. Its function is as follows. Seems to be required for the assembly of the photosystem I complex. This chain is Photosystem I assembly protein Ycf4, found in Amborella trichopoda.